The chain runs to 188 residues: uncharacterized protein (188 aa).

A helical membrane pass occupies residues 136–156 (TLVKLLLLFLSLMVVIVGVWW).

It is found in the host membrane. This is an uncharacterized protein from Magallana gigas (Pacific oyster).